Reading from the N-terminus, the 440-residue chain is NADH-quinone oxidoreductase subunit D (440 aa).

Belongs to the complex I 49 kDa subunit family. As to quaternary structure, NDH-1 is composed of 14 different subunits. Subunits NuoB, C, D, E, F, and G constitute the peripheral sector of the complex.

It is found in the cell membrane. The catalysed reaction is a quinone + NADH + 5 H(+)(in) = a quinol + NAD(+) + 4 H(+)(out). In terms of biological role, NDH-1 shuttles electrons from NADH, via FMN and iron-sulfur (Fe-S) centers, to quinones in the respiratory chain. The immediate electron acceptor for the enzyme in this species is believed to be a menaquinone. Couples the redox reaction to proton translocation (for every two electrons transferred, four hydrogen ions are translocated across the cytoplasmic membrane), and thus conserves the redox energy in a proton gradient. The polypeptide is NADH-quinone oxidoreductase subunit D (Acidothermus cellulolyticus (strain ATCC 43068 / DSM 8971 / 11B)).